The sequence spans 2053 residues: Cell adhesion molecule DSCAML1 (2053 aa).

The signal sequence occupies residues 1–18 (MWLVTFLLLLDSLHKARP). 9 Ig-like C2-type domains span residues 19-119 (EDVG…NIRV), 115-217 (PNIR…ARLS), 226-306 (PTIL…AEAT), 314-402 (PLHV…AIIA), 408-501 (PRIV…ARIN), 506-586 (PSIR…LSIS), 596-685 (PPLI…RQLI), 690-784 (PRFV…MFLT), and 788-885 (PAMI…LTVQ). Over 19-1591 (EDVGTSLYFV…AQGEGDDVKK (1573 aa)) the chain is Extracellular. N-linked (GlcNAc...) asparagine glycans are attached at residues asparagine 29 and asparagine 79. Intrachain disulfides connect cysteine 47–cysteine 103, cysteine 146–cysteine 198, cysteine 247–cysteine 294, cysteine 336–cysteine 386, and cysteine 429–cysteine 485. Asparagine 368, asparagine 471, asparagine 513, asparagine 556, asparagine 666, asparagine 710, asparagine 749, asparagine 796, and asparagine 809 each carry an N-linked (GlcNAc...) asparagine glycan. Intrachain disulfides connect cysteine 526/cysteine 575 and cysteine 617/cysteine 669. The cysteines at positions 711 and 767 are disulfide-linked. Cysteine 810 and cysteine 867 are disulfide-bonded. Fibronectin type-III domains lie at 887 to 984 (PPDP…TEEA), 989 to 1088 (PPMD…TLED), 1093 to 1189 (PPEN…TKED), and 1193 to 1288 (PPAG…AGKA). Residues asparagine 926, asparagine 1082, asparagine 1144, asparagine 1162, asparagine 1275, and asparagine 1345 are each glycosylated (N-linked (GlcNAc...) asparagine). The Ig-like C2-type 10 domain occupies 1278–1377 (EKVTIEPAGK…TGGFDTIIVN (100 aa)). Cysteines 1311 and 1363 form a disulfide. 2 consecutive Fibronectin type-III domains span residues 1383-1477 (PPDQ…THGR) and 1478-1578 (EPSF…TIPP). Residues asparagine 1492, asparagine 1531, and asparagine 1561 are each glycosylated (N-linked (GlcNAc...) asparagine). The helical transmembrane segment at 1592 to 1612 (LFTIGCPVILATLGVALLFIV) threads the bilayer. Over 1613-2053 (RKKRKEKRLK…GAYSKSYTLV (441 aa)) the chain is Cytoplasmic. 4 disordered regions span residues 1715 to 1741 (PLID…HSTR), 1773 to 1803 (HGVT…STES), 1840 to 1862 (SSDQ…STPS), and 1974 to 2053 (LAMP…YTLV). A compositionally biased stretch (basic residues) spans 1732-1741 (KNVKSAHSTR). Residues 1773–1789 (HGVTVTESDSYSASLSQ) are compositionally biased toward polar residues. Residues 1977–2009 (PAPPAGTAPPAPGPTPAEPPTAPSAAPPAPSTE) are compositionally biased toward pro residues. A compositionally biased stretch (polar residues) spans 2029 to 2041 (EMSTSGVGRSQKQ).

As to quaternary structure, homodimer; mediates homophilic interactions to promote cell adhesion. Detected in heart, liver, pancreas, skeletal muscle, kidney and in brain, in particular in the amygdala, caudate nucleus, corpus callosum, hippocampus, substantia nigra, thalamus and subthalamus.

The protein resides in the cell membrane. The protein localises to the synapse. In terms of biological role, cell adhesion molecule that plays a role in neuronal self-avoidance. Promotes repulsion between specific neuronal processes of either the same cell or the same subtype of cells. Promotes both isoneuronal self-avoidance for creating an orderly neurite arborization in retinal rod bipolar cells and heteroneuronal self-avoidance to maintain mosaic spacing between AII amacrine cells. Adhesion molecule that promotes lamina-specific synaptic connections in the retina: expressed in specific subsets of interneurons and retinal ganglion cells (RGCs) and promotes synaptic connectivity via homophilic interactions. This is Cell adhesion molecule DSCAML1 (DSCAML1) from Homo sapiens (Human).